The chain runs to 183 residues: MEAPCPDKIWQDAGGAFAIGYVLMGVVNIGLGFKRSPPNKRVLYTFALLRKKSPKFGGNFAIWGSLFSGFDCTLSYIRKTEDTVNPIAAGALTGGILAARSGWKHSVQAAAFGGIFIGIIEAFQHMMQKRMQAQQEEMTQQHLEERKRYEEERKQREGERKKLNENGKSKKNKQQQNGENDLD.

A run of 3 helical transmembrane segments spans residues 13 to 33 (AGGAFAIGYVLMGVVNIGLGF), 57 to 77 (GGNFAIWGSLFSGFDCTLSYI), and 107 to 127 (VQAAAFGGIFIGIIEAFQHMM). Positions 131–141 (MQAQQEEMTQQ) are enriched in polar residues. The tract at residues 131-183 (MQAQQEEMTQQHLEERKRYEEERKQREGERKKLNENGKSKKNKQQQNGENDLD) is disordered. The segment covering 142–168 (HLEERKRYEEERKQREGERKKLNENGK) has biased composition (basic and acidic residues). Low complexity predominate over residues 174–183 (QQQNGENDLD).

This sequence belongs to the Tim17/Tim22/Tim23 family.

The protein localises to the mitochondrion inner membrane. In terms of biological role, may be involved in the translocation of transit peptide-containing proteins across the mitochondrial inner membrane. The chain is Mitochondrial import inner membrane translocase subunit tim17 (timm17) from Dictyostelium discoideum (Social amoeba).